Reading from the N-terminus, the 244-residue chain is 1-(5-phosphoribosyl)-5-[(5-phosphoribosylamino)methylideneamino] imidazole-4-carboxamide isomerase (244 aa).

The active-site Proton acceptor is aspartate 8. Catalysis depends on aspartate 131, which acts as the Proton donor.

This sequence belongs to the HisA/HisF family.

It localises to the cytoplasm. The enzyme catalyses 1-(5-phospho-beta-D-ribosyl)-5-[(5-phospho-beta-D-ribosylamino)methylideneamino]imidazole-4-carboxamide = 5-[(5-phospho-1-deoxy-D-ribulos-1-ylimino)methylamino]-1-(5-phospho-beta-D-ribosyl)imidazole-4-carboxamide. It participates in amino-acid biosynthesis; L-histidine biosynthesis; L-histidine from 5-phospho-alpha-D-ribose 1-diphosphate: step 4/9. In Thermomicrobium roseum (strain ATCC 27502 / DSM 5159 / P-2), this protein is 1-(5-phosphoribosyl)-5-[(5-phosphoribosylamino)methylideneamino] imidazole-4-carboxamide isomerase.